A 383-amino-acid chain; its full sequence is Queuine tRNA-ribosyltransferase (383 aa).

Catalysis depends on Asp-95, which acts as the Proton acceptor. Residues 95–99, Asp-149, Gln-195, and Gly-222 contribute to the substrate site; that span reads DSGGF. Residues 253–259 are RNA binding; the sequence is GVGSPDS. Catalysis depends on Asp-272, which acts as the Nucleophile. The tract at residues 277-281 is RNA binding; important for wobble base 34 recognition; it reads TRIAR. 4 residues coordinate Zn(2+): Cys-310, Cys-312, Cys-315, and His-341.

It belongs to the queuine tRNA-ribosyltransferase family. In terms of assembly, homodimer. Within each dimer, one monomer is responsible for RNA recognition and catalysis, while the other monomer binds to the replacement base PreQ1. Requires Zn(2+) as cofactor.

It catalyses the reaction 7-aminomethyl-7-carbaguanine + guanosine(34) in tRNA = 7-aminomethyl-7-carbaguanosine(34) in tRNA + guanine. Its pathway is tRNA modification; tRNA-queuosine biosynthesis. Catalyzes the base-exchange of a guanine (G) residue with the queuine precursor 7-aminomethyl-7-deazaguanine (PreQ1) at position 34 (anticodon wobble position) in tRNAs with GU(N) anticodons (tRNA-Asp, -Asn, -His and -Tyr). Catalysis occurs through a double-displacement mechanism. The nucleophile active site attacks the C1' of nucleotide 34 to detach the guanine base from the RNA, forming a covalent enzyme-RNA intermediate. The proton acceptor active site deprotonates the incoming PreQ1, allowing a nucleophilic attack on the C1' of the ribose to form the product. After dissociation, two additional enzymatic reactions on the tRNA convert PreQ1 to queuine (Q), resulting in the hypermodified nucleoside queuosine (7-(((4,5-cis-dihydroxy-2-cyclopenten-1-yl)amino)methyl)-7-deazaguanosine). This Shouchella clausii (strain KSM-K16) (Alkalihalobacillus clausii) protein is Queuine tRNA-ribosyltransferase.